A 535-amino-acid chain; its full sequence is Alkaline phosphatase, placental type (535 aa).

The first 22 residues, 1-22 (MLGPCMLLLLLLLGLRLQLSLG), serve as a signal peptide directing secretion. Asp-64 contributes to the Mg(2+) binding site. Zn(2+) is bound by residues Asp-64 and Ser-114. Residue Ser-114 is the Phosphoserine intermediate of the active site. Cys-143 and Cys-205 are oxidised to a cystine. N-linked (GlcNAc...) asparagine glycosylation is present at Asn-144. Ser-177 provides a ligand contact to Mg(2+). Ca(2+) is bound at residue Glu-238. A glycan (N-linked (GlcNAc...) asparagine) is linked at Asn-271. Phe-291, Glu-292, and Asp-307 together coordinate Ca(2+). Mg(2+) is bound at residue Glu-333. Asp-338, His-342, Asp-379, and His-380 together coordinate Zn(2+). The segment at 425–449 (DGARPDVTESESGSPEYRQQSAVPL) is disordered. Residues 434–446 (SESGSPEYRQQSA) are compositionally biased toward polar residues. His-454 serves as a coordination point for Zn(2+). Residues Cys-489 and Cys-496 are joined by a disulfide bond. A lipid anchor (GPI-anchor amidated aspartate) is attached at Asp-506. A propeptide spans 507 to 535 (AAHPGRSVVPALLPLLAGTLLLLETATAP) (removed in mature form). Residues 513–529 (SVVPALLPLLAGTLLLL) traverse the membrane as a helical segment.

The protein belongs to the alkaline phosphatase family. In terms of assembly, homodimer. The cofactor is Mg(2+). It depends on Zn(2+) as a cofactor. Ca(2+) serves as cofactor. Detected in placenta (at protein level).

It is found in the cell membrane. The enzyme catalyses a phosphate monoester + H2O = an alcohol + phosphate. Its function is as follows. Alkaline phosphatase that can hydrolyze various phosphate compounds. This is Alkaline phosphatase, placental type from Homo sapiens (Human).